A 471-amino-acid polypeptide reads, in one-letter code: 3-isopropylmalate dehydratase large subunit (471 aa).

The [4Fe-4S] cluster site is built by Cys347, Cys407, and Cys410.

Belongs to the aconitase/IPM isomerase family. LeuC type 1 subfamily. In terms of assembly, heterodimer of LeuC and LeuD. [4Fe-4S] cluster is required as a cofactor.

The catalysed reaction is (2R,3S)-3-isopropylmalate = (2S)-2-isopropylmalate. The protein operates within amino-acid biosynthesis; L-leucine biosynthesis; L-leucine from 3-methyl-2-oxobutanoate: step 2/4. Functionally, catalyzes the isomerization between 2-isopropylmalate and 3-isopropylmalate, via the formation of 2-isopropylmaleate. The sequence is that of 3-isopropylmalate dehydratase large subunit from Anoxybacillus flavithermus (strain DSM 21510 / WK1).